A 131-amino-acid chain; its full sequence is Profilin-5 (131 aa).

Cysteines 13 and 115 form a disulfide. An Involved in PIP2 interaction motif is present at residues 81-97 (AVIRGKKGAGGITIKKT). A Phosphothreonine modification is found at threonine 111.

This sequence belongs to the profilin family. In terms of assembly, occurs in many kinds of cells as a complex with monomeric actin in a 1:1 ratio. Phosphorylated by MAP kinases.

It localises to the cytoplasm. The protein localises to the cytoskeleton. In terms of biological role, binds to actin and affects the structure of the cytoskeleton. At high concentrations, profilin prevents the polymerization of actin, whereas it enhances it at low concentrations. The polypeptide is Profilin-5 (Olea europaea (Common olive)).